Reading from the N-terminus, the 326-residue chain is UDP-N-acetylglucosamine transporter (326 aa).

The next 8 membrane-spanning stretches (helical) occupy residues 4-24 (NLKY…VLTM), 38-58 (LSST…ILLV), 136-156 (LGVY…FVQW), 174-194 (FVGL…GVYF), 212-232 (LGFF…GELV), 244-264 (LTWI…AVIK), 269-289 (ILKG…SYFW), and 293-313 (FVPT…TFLY).

Belongs to the nucleotide-sugar transporter family. SLC35A subfamily. Interacts with SLC35A2; the interaction is reduced in the presence of SLC35A4. Found in a complex with SLC35A2 and SLC35A4. Interacts with MGAT4B. Post-translationally, O-Glcnacylation regulates the stability of SLC35A3 and the specific complex formation with MGAT4B.

It is found in the golgi apparatus membrane. It carries out the reaction UMP(out) + UDP-N-acetyl-alpha-D-glucosamine(in) = UMP(in) + UDP-N-acetyl-alpha-D-glucosamine(out). Transports diphosphate-N-acetylglucosamine (UDP-GlcNAc) from the cytosol into the lumen of the Golgi apparatus, functioning as an antiporter that exchanges UDP-N-acetyl-alpha-D-glucosamine for UMP. May supply UDP-GlcNAc as substrate for Golgi-resident glycosyltransferases that generate highly branched, multiantennary complex N-glycans and keratan sulfate. However, the exact role of SLC35A3 still needs to be elucidated, it could be a member of a catalytically more efficient multiprotein complex rather than function independently as a single transporter. The polypeptide is UDP-N-acetylglucosamine transporter (SLC35A3) (Bos taurus (Bovine)).